Reading from the N-terminus, the 363-residue chain is Putative transcriptional activator MSA2 (363 aa).

Residues 1–20 form a disordered region; the sequence is MVYTTPQQQQRFSSTPQSSH. A phosphoserine mark is found at serine 157 and serine 292.

As to quaternary structure, interacts with transcription complexes SCB-binding factor (SBF) and MCB-binding factor (MBF). Interacts with SWI4.

The polypeptide is Putative transcriptional activator MSA2 (MSA2) (Saccharomyces cerevisiae (strain ATCC 204508 / S288c) (Baker's yeast)).